The primary structure comprises 120 residues: Large ribosomal subunit protein uL18 (120 aa).

This sequence belongs to the universal ribosomal protein uL18 family. In terms of assembly, part of the 50S ribosomal subunit; part of the 5S rRNA/L5/L18/L25 subcomplex. Contacts the 5S and 23S rRNAs.

Its function is as follows. This is one of the proteins that bind and probably mediate the attachment of the 5S RNA into the large ribosomal subunit, where it forms part of the central protuberance. This chain is Large ribosomal subunit protein uL18, found in Staphylococcus haemolyticus (strain JCSC1435).